The chain runs to 227 residues: Germin-like protein subfamily 3 member 2 (227 aa).

The N-terminal stretch at 1 to 24 is a signal peptide; the sequence is MEANTLFLLKALCLLCFNVCFTLA. A disulfide bridge links cysteine 34 with cysteine 54. Residues asparagine 56 and asparagine 75 are each glycosylated (N-linked (GlcNAc...) asparagine). Positions 68 to 213 constitute a Cupin type-1 domain; it reads SGLKTAGNFT…AFGLSLKQIG (146 aa). Positions 115, 117, 122, and 161 each coordinate Mn(2+).

It belongs to the germin family. As to quaternary structure, oligomer (believed to be a pentamer but probably hexamer).

It is found in the secreted. The protein localises to the extracellular space. Its subcellular location is the apoplast. In terms of biological role, may play a role in plant defense. Probably has no oxalate oxidase activity even if the active site is conserved. This chain is Germin-like protein subfamily 3 member 2, found in Arabidopsis thaliana (Mouse-ear cress).